The following is a 130-amino-acid chain: Glycine cleavage system H protein (130 aa).

Positions 24–106 (IYSVGITEHA…YADGWLFRIR (83 aa)) constitute a Lipoyl-binding domain. Lysine 65 is modified (N6-lipoyllysine).

This sequence belongs to the GcvH family. In terms of assembly, the glycine cleavage system is composed of four proteins: P, T, L and H. (R)-lipoate is required as a cofactor.

The glycine cleavage system catalyzes the degradation of glycine. The H protein shuttles the methylamine group of glycine from the P protein to the T protein. This is Glycine cleavage system H protein from Pectobacterium carotovorum subsp. carotovorum (strain PC1).